The sequence spans 646 residues: Envelope glycoprotein (646 aa).

A signal peptide spans M1–T25. The Lumenal portion of the chain corresponds to I26 to A119. Residues N72, N80, and N101 are each glycosylated (N-linked (GlcNAc...) asparagine; by host). A helical membrane pass occupies residues I120–V140. Residues H141–S176 are Cytoplasmic-facing. A helical transmembrane segment spans residues D177–A197. Over D198–K588 the chain is Lumenal. Residues N247 and N336 are each glycosylated (N-linked (GlcNAc...) asparagine; by host). A helical transmembrane segment spans residues I589–M609. The Cytoplasmic segment spans residues L610–S646.

As to quaternary structure, G2 and G1 interact with each other. Specific enzymatic cleavages in vivo yield mature proteins including glycoprotein G1 and glycoprotein G2. Post-translationally, glycosylated. Glycosylation is essential for proper subcellular location.

It localises to the virion membrane. The protein resides in the host Golgi apparatus membrane. Glycoprotein G2 and glycoprotein G1 interact with each other and are present at the surface of the virion. They are able to attach the virion to a cell receptor and to promote fusion of membranes after endocytosis of the virion. The sequence is that of Envelope glycoprotein from European mountain ash ringspot-associated virus (isolate Sorbus aucuparia) (EMARAV).